Reading from the N-terminus, the 74-residue chain is Male-specific sperm protein Mst84Db (74 aa).

Belongs to the MST(3)CGP family. Testis.

The polypeptide is Male-specific sperm protein Mst84Db (Mst84Db) (Drosophila melanogaster (Fruit fly)).